A 132-amino-acid chain; its full sequence is Large ribosomal subunit protein bL21 (132 aa).

Residues 104 to 132 (GKAPSIGPRPPREKKPVVETSAEADDAAA) are disordered.

It belongs to the bacterial ribosomal protein bL21 family. As to quaternary structure, part of the 50S ribosomal subunit. Contacts protein L20.

This protein binds to 23S rRNA in the presence of protein L20. The protein is Large ribosomal subunit protein bL21 of Rhodopseudomonas palustris (strain BisB18).